We begin with the raw amino-acid sequence, 409 residues long: Peptidase T (409 aa).

Position 78 (His-78) interacts with Zn(2+). The active site involves Asp-80. Asp-140 is a Zn(2+) binding site. Residue Glu-173 is the Proton acceptor of the active site. Glu-174, Asp-196, and His-379 together coordinate Zn(2+).

The protein belongs to the peptidase M20B family. Zn(2+) is required as a cofactor.

The protein resides in the cytoplasm. It catalyses the reaction Release of the N-terminal residue from a tripeptide.. Cleaves the N-terminal amino acid of tripeptides. This is Peptidase T from Salmonella agona (strain SL483).